We begin with the raw amino-acid sequence, 657 residues long: N-acetylgalactosaminyltransferase 7 (657 aa).

Over 1 to 6 the chain is Cytoplasmic; that stretch reads MRLKIG. Residues 7 to 29 traverse the membrane as a helical; Signal-anchor for type II membrane protein segment; that stretch reads FILRSLLVVGSFLGLVVLWSSLS. Disordered stretches follow at residues 30-66 and 83-105; these read SRPD…DDRF and ESIR…DSQR. Residues 30–657 are Lumenal-facing; it reads SRPDDQSPLS…KWEMNNIHSV (628 aa). 5 cysteine pairs are disulfide-bonded: C197/C435, C426/C507, C545/C562, C585/C600, and C625/C640. The catalytic subdomain A stretch occupies residues 206 to 317; it reads LLTSSVVIVF…VNWYAPLVAP (112 aa). Residues D247 and R277 each contribute to the substrate site. D301 and H303 together coordinate Mn(2+). The segment at 381–443 is catalytic subdomain B; sequence PYRSPAMAGG…PCSRVGHIYR (63 aa). W412 contributes to the substrate binding site. H440 is a binding site for Mn(2+). Substrate is bound at residue R443. Positions 532 to 652 constitute a Ricin B-type lectin domain; that stretch reads VEWGEIRGLE…SKMTQKWEMN (121 aa).

This sequence belongs to the glycosyltransferase 2 family. GalNAc-T subfamily. Requires Mn(2+) as cofactor. As to expression, highly expressed in sublingual gland. Expressed at lower level in stomach, small intestiine and colon.

It is found in the golgi apparatus membrane. The catalysed reaction is L-seryl-[protein] + UDP-N-acetyl-alpha-D-galactosamine = a 3-O-[N-acetyl-alpha-D-galactosaminyl]-L-seryl-[protein] + UDP + H(+). It catalyses the reaction L-threonyl-[protein] + UDP-N-acetyl-alpha-D-galactosamine = a 3-O-[N-acetyl-alpha-D-galactosaminyl]-L-threonyl-[protein] + UDP + H(+). It participates in protein modification; protein glycosylation. Glycopeptide transferase involved in O-linked oligosaccharide biosynthesis, which catalyzes the transfer of an N-acetyl-D-galactosamine residue to an already glycosylated peptide. In contrast to other proteins of the family, it does not act as a peptide transferase that transfers GalNAc onto serine or threonine residue on the protein receptor, but instead requires the prior addition of a GalNAc on a peptide before adding additional GalNAc moieties. Some peptide transferase activity is however not excluded, considering that its appropriate peptide substrate may remain unidentified. The chain is N-acetylgalactosaminyltransferase 7 (Galnt7) from Mus musculus (Mouse).